A 150-amino-acid chain; its full sequence is Large ribosomal subunit protein bL9 (150 aa).

This sequence belongs to the bacterial ribosomal protein bL9 family.

Binds to the 23S rRNA. The protein is Large ribosomal subunit protein bL9 of Idiomarina loihiensis (strain ATCC BAA-735 / DSM 15497 / L2-TR).